Here is a 503-residue protein sequence, read N- to C-terminus: Ell-associated factor Eaf (503 aa).

2 stretches are compositionally biased toward polar residues: residues Pro143 to Ala158 and Glu170 to Asn189. Disordered stretches follow at residues Pro143–Asp223 and Asn251–Asp503. The residue at position 199 (Ser199) is a Phosphoserine. The segment covering Asn251 to Ser264 has biased composition (polar residues). Positions Gly281–Gln296 are enriched in basic residues. Positions Arg297–Arg311 are enriched in polar residues. The span at Asn312–His326 shows a compositional bias: low complexity. The segment covering Asp382–Glu397 has biased composition (acidic residues). Composition is skewed to low complexity over residues Met415–His435 and Asn484–Ser497.

It belongs to the EAF family.

It is found in the nucleus. Promotes transcriptional elongation by Su(Tpl)/ELL. Essential for development. In Drosophila ananassae (Fruit fly), this protein is Ell-associated factor Eaf.